A 327-amino-acid chain; its full sequence is Aspartate--ammonia ligase (327 aa).

It belongs to the class-II aminoacyl-tRNA synthetase family. AsnA subfamily.

It is found in the cytoplasm. The enzyme catalyses L-aspartate + NH4(+) + ATP = L-asparagine + AMP + diphosphate + H(+). It participates in amino-acid biosynthesis; L-asparagine biosynthesis; L-asparagine from L-aspartate (ammonia route): step 1/1. The protein is Aspartate--ammonia ligase of Bacillus mycoides (strain KBAB4) (Bacillus weihenstephanensis).